Consider the following 597-residue polypeptide: Aspartate--tRNA(Asp/Asn) ligase (597 aa).

Residue E175 coordinates L-aspartate. The interval 199-202 (QLFK) is aspartate. R221 provides a ligand contact to L-aspartate. Residues 221-223 (RDE) and Q230 contribute to the ATP site. Residue H453 coordinates L-aspartate. E487 serves as a coordination point for ATP. R494 lines the L-aspartate pocket. Residue 539-542 (GWDR) participates in ATP binding. Positions 562–597 (SGGGVDPLTDAPAPITPEQRKESGIDAKPKKKETKN) are disordered. Basic and acidic residues predominate over residues 579–589 (EQRKESGIDAK).

It belongs to the class-II aminoacyl-tRNA synthetase family. Type 1 subfamily. Homodimer.

It is found in the cytoplasm. The catalysed reaction is tRNA(Asx) + L-aspartate + ATP = L-aspartyl-tRNA(Asx) + AMP + diphosphate. In terms of biological role, aspartyl-tRNA synthetase with relaxed tRNA specificity since it is able to aspartylate not only its cognate tRNA(Asp) but also tRNA(Asn). Reaction proceeds in two steps: L-aspartate is first activated by ATP to form Asp-AMP and then transferred to the acceptor end of tRNA(Asp/Asn). This Corynebacterium kroppenstedtii (strain DSM 44385 / JCM 11950 / CIP 105744 / CCUG 35717) protein is Aspartate--tRNA(Asp/Asn) ligase.